A 504-amino-acid polypeptide reads, in one-letter code: Maturase K (504 aa).

The protein belongs to the intron maturase 2 family. MatK subfamily.

It is found in the plastid. It localises to the chloroplast. Functionally, usually encoded in the trnK tRNA gene intron. Probably assists in splicing its own and other chloroplast group II introns. The chain is Maturase K from Taxus baccata (English yew).